We begin with the raw amino-acid sequence, 258 residues long: Imidazole glycerol phosphate synthase subunit HisF (258 aa).

Residues Asp-11 and Asp-130 contribute to the active site.

Belongs to the HisA/HisF family. As to quaternary structure, heterodimer of HisH and HisF.

The protein localises to the cytoplasm. It carries out the reaction 5-[(5-phospho-1-deoxy-D-ribulos-1-ylimino)methylamino]-1-(5-phospho-beta-D-ribosyl)imidazole-4-carboxamide + L-glutamine = D-erythro-1-(imidazol-4-yl)glycerol 3-phosphate + 5-amino-1-(5-phospho-beta-D-ribosyl)imidazole-4-carboxamide + L-glutamate + H(+). It participates in amino-acid biosynthesis; L-histidine biosynthesis; L-histidine from 5-phospho-alpha-D-ribose 1-diphosphate: step 5/9. Its function is as follows. IGPS catalyzes the conversion of PRFAR and glutamine to IGP, AICAR and glutamate. The HisF subunit catalyzes the cyclization activity that produces IGP and AICAR from PRFAR using the ammonia provided by the HisH subunit. The chain is Imidazole glycerol phosphate synthase subunit HisF from Salmonella agona (strain SL483).